Reading from the N-terminus, the 133-residue chain is Large ribosomal subunit protein bL20 (133 aa).

The protein belongs to the bacterial ribosomal protein bL20 family.

Binds directly to 23S ribosomal RNA and is necessary for the in vitro assembly process of the 50S ribosomal subunit. It is not involved in the protein synthesizing functions of that subunit. This is Large ribosomal subunit protein bL20 from Chelativorans sp. (strain BNC1).